Consider the following 201-residue polypeptide: Molybdenum cofactor guanylyltransferase (201 aa).

Residues 15–17, K28, D74, and D104 each bind GTP; that span reads LAG. A Mg(2+)-binding site is contributed by D104.

Belongs to the MobA family. Monomer. Requires Mg(2+) as cofactor.

It localises to the cytoplasm. It carries out the reaction Mo-molybdopterin + GTP + H(+) = Mo-molybdopterin guanine dinucleotide + diphosphate. Transfers a GMP moiety from GTP to Mo-molybdopterin (Mo-MPT) cofactor (Moco or molybdenum cofactor) to form Mo-molybdopterin guanine dinucleotide (Mo-MGD) cofactor. This is Molybdenum cofactor guanylyltransferase from Pseudomonas syringae pv. syringae (strain B728a).